A 588-amino-acid chain; its full sequence is Arylsulfatase L (588 aa).

A signal peptide spans 1–31 (MLHLHHSWLCFRSWLAGMLSVLLGLVPSASS). Residue Asn-32 is glycosylated (N-linked (GlcNAc...) asparagine). Ca(2+) is bound by residues Asp-46 and Asp-47. A glycan (N-linked (GlcNAc...) asparagine) is linked at Asn-58. Cys-86 lines the Ca(2+) pocket. Residue Cys-86 is the Nucleophile of the active site. Cys-86 bears the 3-oxoalanine (Cys) mark. Asn-125 is a glycosylation site (N-linked (GlcNAc...) asparagine). A substrate-binding site is contributed by Lys-145. The active site involves His-147. Residue Asn-258 is glycosylated (N-linked (GlcNAc...) asparagine). His-301 contacts substrate. Residue Asn-344 is glycosylated (N-linked (GlcNAc...) asparagine). The Ca(2+) site is built by Asp-353 and His-354. Lys-378 is a substrate binding site.

The protein belongs to the sulfatase family. Ca(2+) is required as a cofactor. In terms of processing, the conversion to 3-oxoalanine (also known as C-formylglycine, FGly), of a serine or cysteine residue in prokaryotes and of a cysteine residue in eukaryotes, is critical for catalytic activity.

It localises to the golgi apparatus. The protein localises to the golgi stack. The catalysed reaction is an aryl sulfate + H2O = a phenol + sulfate + H(+). Exhibits arylsulfatase activity towards the artificial substrate 4-methylumbelliferyl sulfate. May be essential for the correct composition of cartilage and bone matrix during development. Has no activity toward steroid sulfates. The chain is Arylsulfatase L (ARSL) from Macaca fascicularis (Crab-eating macaque).